A 208-amino-acid polypeptide reads, in one-letter code: MDIEWQISSGLVEYEVAVNAMVSRVDKIVQGSEREMVWLLEHPPVYTAGTSANSSDLLIDNLFPVIKTTRGGKYSYHGPGQRVVYVMLDLKRRNRCDIRAYVRDLGVWIVNTLAEFAIDSYFSSENIGVWVQNDMHSEKIAAFGIRLRRWVTYHGVAINISTDLTHYSGIVPCGILGSGVTSLRALGKEVTFEQFDSALKKEFYKVFA.

The BPL/LPL catalytic domain maps to 31–208 (GSEREMVWLL…LKKEFYKVFA (178 aa)). Substrate-binding positions include 70–77 (RGGKYSYH), 142–144 (AFG), and 155–157 (GVA). Cys173 (acyl-thioester intermediate) is an active-site residue.

The protein belongs to the LipB family.

It localises to the cytoplasm. The enzyme catalyses octanoyl-[ACP] + L-lysyl-[protein] = N(6)-octanoyl-L-lysyl-[protein] + holo-[ACP] + H(+). It participates in protein modification; protein lipoylation via endogenous pathway; protein N(6)-(lipoyl)lysine from octanoyl-[acyl-carrier-protein]: step 1/2. Its function is as follows. Catalyzes the transfer of endogenously produced octanoic acid from octanoyl-acyl-carrier-protein onto the lipoyl domains of lipoate-dependent enzymes. Lipoyl-ACP can also act as a substrate although octanoyl-ACP is likely to be the physiological substrate. This chain is Octanoyltransferase, found in Anaplasma phagocytophilum (strain HZ).